The sequence spans 347 residues: MRIEEDLKLGFKDVLIRPKRSTLKSRSDVELERQFTFKHSGQTWSGVPIIAANMDTVGTFEMAQALAGFDILTAVHKHYTVEEWAAFINTASADVLKHVMVSTGTSDADFEKTVQILALDPALNFVCIDVANGYSEHFVQFVAKAREAWPTKTICAGNVVTGEMCEELILSGADIVKVGIGPGSVCTTRVKTGVGYPQLSAVIECADAAHGLGGMIVSDGGCTMPGDVAKAFGGGADFVMLGGMLAGHEESGGSVVEENGEKFMLFYGMSSESAMNRHVGGVAKYRAAEGKTVKLPLRGPVGNTARDILGGLRSACTYVGASRLKELTKRTTFIRVQEQENRIFNSL.

108 to 131 (ADFEKTVQILALDPALNFVCIDVA) provides a ligand contact to NADP(+). Residues Gly181 and Gly183 each contribute to the K(+) site. Cys186 acts as the Thioimidate intermediate in catalysis. Position 216–239 (216–239 (IVSDGGCTMPGDVAKAFGGGADFV)) interacts with NADP(+).

This sequence belongs to the IMPDH/GMPR family. GuaC type 1 subfamily. Homotetramer.

It catalyses the reaction IMP + NH4(+) + NADP(+) = GMP + NADPH + 2 H(+). Catalyzes the irreversible NADPH-dependent deamination of GMP to IMP. It functions in the conversion of nucleobase, nucleoside and nucleotide derivatives of G to A nucleotides, and in maintaining the intracellular balance of A and G nucleotides. This Salmonella paratyphi B (strain ATCC BAA-1250 / SPB7) protein is GMP reductase.